A 73-amino-acid chain; its full sequence is Toxin Td3 (73 aa).

The signal sequence occupies residues 1–7 (IGMVVEC). The region spanning 8–70 (KDGYLMGPDG…VWERATNRCG (63 aa)) is the LCN-type CS-alpha/beta domain. Cystine bridges form between Cys18–Cys69, Cys22–Cys44, Cys30–Cys50, and Cys34–Cys52. At Lys71 the chain carries Lysine amide.

The protein belongs to the long (4 C-C) scorpion toxin superfamily. Sodium channel inhibitor family. Beta subfamily. As to expression, expressed by the venom gland.

The protein localises to the secreted. Beta toxins bind voltage-independently at site-4 of sodium channels (Nav) and shift the voltage of activation toward more negative potentials thereby affecting sodium channel activation and promoting spontaneous and repetitive firing. This chain is Toxin Td3, found in Tityus discrepans (Venezuelan scorpion).